The chain runs to 61 residues: Bacteriocin leucocin-A (61 aa).

Residues 1 to 24 constitute a propeptide that is removed on maturation; sequence MMNMKPTESYEQLDNSALEQVVGG. Cysteine 33 and cysteine 38 are oxidised to a cystine.

This sequence belongs to the bacteriocin class IIA/YGNGV family.

It localises to the secreted. Its function is as follows. Inhibits a wide spectrum of lactic acid bacteria. The sequence is that of Bacteriocin leucocin-A (lcnA) from Leuconostoc gelidum.